Reading from the N-terminus, the 238-residue chain is MASSTGLTVAGALLAGDFRLPAVSSLIPRKTSSSLSCLSNRDLSSPYNCCWRLSRGKILTSLSNSRKFAVGKEAEDGFLSNVSEDTDEMFDDLFNKYGKVVFRSTDVKSPTAEVDDDAESLAFAVELAKVASDVKAGDIKVLFVKPLVYWTRFFIIATAFSRPQIDAIGSRMRDLAEKKYGKVANGDVKPNSWTLLDFGDVVIHLFLPPQRTFYNLEDFYGNAMQIELPFEDQSQPRN.

Residues 1–66 (MASSTGLTVA…KILTSLSNSR (66 aa)) constitute a chloroplast transit peptide.

It belongs to the Iojap/RsfS family. As to quaternary structure, interacts with chloroplast ribosomal protein uL14c (rpl14).

The protein localises to the plastid. It is found in the chloroplast. In terms of biological role, may be a ribosome silencing factor (Potential). Involved in plastid biogenesis. This chain is Protein Iojap, chloroplastic (IJ), found in Arabidopsis thaliana (Mouse-ear cress).